Here is a 154-residue protein sequence, read N- to C-terminus: Transcription antitermination protein NusB (154 aa).

The protein belongs to the NusB family.

Its function is as follows. Involved in transcription antitermination. Required for transcription of ribosomal RNA (rRNA) genes. Binds specifically to the boxA antiterminator sequence of the ribosomal RNA (rrn) operons. The polypeptide is Transcription antitermination protein NusB (Desulfosudis oleivorans (strain DSM 6200 / JCM 39069 / Hxd3) (Desulfococcus oleovorans)).